Reading from the N-terminus, the 121-residue chain is uncharacterized protein (121 aa).

The next 3 helical transmembrane spans lie at Met12–Val32, Val35–Leu55, and Val67–Asp87.

This sequence belongs to the sbp family.

It localises to the cell membrane. This is an uncharacterized protein from Mycobacterium bovis (strain ATCC BAA-935 / AF2122/97).